A 61-amino-acid chain; its full sequence is Large ribosomal subunit protein eL20 (61 aa).

This sequence belongs to the eukaryotic ribosomal protein eL20 family. As to quaternary structure, part of the 50S ribosomal subunit. Binds 23S rRNA.

In Methanosarcina acetivorans (strain ATCC 35395 / DSM 2834 / JCM 12185 / C2A), this protein is Large ribosomal subunit protein eL20.